The chain runs to 147 residues: Protein phosphatase 1 regulatory subunit 14A (147 aa).

Over residues 1–11 the composition is skewed to basic residues; it reads MAAQRLGKRVL. Positions 1 to 36 are disordered; the sequence is MAAQRLGKRVLSKLQSPSRARGPGGSPSGLQKRHAR. Serine 26 carries the phosphoserine modification. Residues 35–120 are inhibitory; it reads ARVTVKYDRR…LLAKLRGLHK (86 aa). Phosphothreonine; by PKC is present on threonine 38. A disordered region spans residues 118–147; it reads LHKQPGFPQPSPSDDPSLSPRQDRAHTAPP. Phosphoserine occurs at positions 128, 134, and 136. A compositionally biased stretch (basic and acidic residues) spans 138–147; sequence RQDRAHTAPP.

Belongs to the PP1 inhibitor family.

The protein resides in the cytoplasm. Inhibitor of PPP1CA. Has over 1000-fold higher inhibitory activity when phosphorylated, creating a molecular switch for regulating the phosphorylation status of PPP1CA substrates and smooth muscle contraction. The chain is Protein phosphatase 1 regulatory subunit 14A (Ppp1r14a) from Mus musculus (Mouse).